The chain runs to 92 residues: Small ribosomal subunit protein uS19c (92 aa).

Belongs to the universal ribosomal protein uS19 family.

The protein resides in the plastid. Its subcellular location is the chloroplast. Its function is as follows. Protein S19 forms a complex with S13 that binds strongly to the 16S ribosomal RNA. This chain is Small ribosomal subunit protein uS19c, found in Coffea arabica (Arabian coffee).